A 710-amino-acid polypeptide reads, in one-letter code: Early transcription factor 82 kDa subunit (710 aa).

The protein belongs to the poxviridae VETF large subunit family. In terms of assembly, heterodimer of a 70 kDa and a 82 kDa subunit. Part of the early transcription complex composed of ETF, RAP94/OPG109, and the DNA-directed RNA polymerase.

It is found in the virion. In terms of biological role, acts with RNA polymerase to initiate transcription from early gene promoters. Is recruited by the RPO-associated protein of 94 kDa RAP94/OPG109 to form the early transcription complex, which also contains the core RNA polymerase. ETF heterodimer binds to early gene promoters. The polypeptide is Early transcription factor 82 kDa subunit (OPG133) (Monkeypox virus).